Here is a 543-residue protein sequence, read N- to C-terminus: Dipeptide-binding protein DppE (543 aa).

The first 22 residues, 1-22, serve as a signal peptide directing secretion; that stretch reads MKRVKKLWGMGLALGLSFALMG. Cys-23 carries N-palmitoyl cysteine lipidation. Residue Cys-23 is the site of S-diacylglycerol cysteine attachment.

The protein belongs to the bacterial solute-binding protein 5 family.

It localises to the cell membrane. Probably part of the ABC transporter DppBCDE involved in dipeptide transport. The chain is Dipeptide-binding protein DppE (dppE) from Bacillus subtilis (strain 168).